Consider the following 129-residue polypeptide: Small ribosomal subunit protein bS16m (129 aa).

The protein belongs to the bacterial ribosomal protein bS16 family. As to quaternary structure, component of the mitochondrial ribosome small subunit (28S) which comprises a 12S rRNA and about 30 distinct proteins.

The protein resides in the mitochondrion. This Drosophila melanogaster (Fruit fly) protein is Small ribosomal subunit protein bS16m (mRpS16).